The sequence spans 465 residues: ATP synthase subunit beta (465 aa).

152–159 serves as a coordination point for ATP; the sequence is GGAGVGKT.

Belongs to the ATPase alpha/beta chains family. In terms of assembly, F-type ATPases have 2 components, CF(1) - the catalytic core - and CF(0) - the membrane proton channel. CF(1) has five subunits: alpha(3), beta(3), gamma(1), delta(1), epsilon(1). CF(0) has three main subunits: a(1), b(2) and c(9-12). The alpha and beta chains form an alternating ring which encloses part of the gamma chain. CF(1) is attached to CF(0) by a central stalk formed by the gamma and epsilon chains, while a peripheral stalk is formed by the delta and b chains.

Its subcellular location is the cell inner membrane. It catalyses the reaction ATP + H2O + 4 H(+)(in) = ADP + phosphate + 5 H(+)(out). Its function is as follows. Produces ATP from ADP in the presence of a proton gradient across the membrane. The catalytic sites are hosted primarily by the beta subunits. The protein is ATP synthase subunit beta of Campylobacter concisus (strain 13826).